Consider the following 1052-residue polypeptide: Mitotic checkpoint serine/threonine-protein kinase BUB1 beta (1052 aa).

Positions 56–219 constitute a BUB1 N-terminal domain; that stretch reads FESEIRFYSG…LEPSEPQRSS (164 aa). The Nuclear localization signal motif lies at 105–112; it reads GETRYYND. The interval 146–179 is necessary for interaction with KNL1; it reads AQFYISWAEEYEARENFKKADIIFQEGIERKAEP. Disordered regions lie at residues 206–256 and 272–327; these read EEEA…NAVP and ADTA…TSIP. The D-box motif lies at 217–225; the sequence is RSSLAELKS. An N6-acetyllysine; by PCAF modification is found at Lys243. At Ser360 the chain carries Phosphoserine. The interval 361–381 is disordered; sequence TRKPGREEGDPLQRVQSHQQG. A Phosphoserine modification is found at Ser428. The segment at 496–552 is disordered; sequence SNPREISPAENILQEQPDSKGSSMPFSIFDESLSDKKDKSPATGGPQVLNAQRRPLS. Positions 508–520 are enriched in polar residues; that stretch reads LQEQPDSKGSSMP. Phosphoserine occurs at positions 535 and 659. Residue Ser665 is modified to Phosphoserine; by PLK1. Ser686 bears the Phosphoserine mark. The Protein kinase domain maps to 756 to 1040; that stretch reads VIKQEHLTCD…TISPEALLTQ (285 aa). 762-770 contacts ATP; sequence LTCDDYRLF. Thr781 is subject to Phosphothreonine; by PLK1. Lys784 provides a ligand contact to ATP. Asp871 (proton acceptor) is an active-site residue. Position 998 is a phosphothreonine; by PLK1 (Thr998). Phosphoserine is present on residues Ser1033 and Ser1050.

Belongs to the protein kinase superfamily. Ser/Thr protein kinase family. BUB1 subfamily. Interacts with CENPE. Interacts with PLK1. Part of a complex containing BUB3, CDC20 and BUB1B. Interacts with anaphase-promoting complex/cyclosome (APC/C). Interacts with KNL1. Interacts with KAT2B. Interacts with RIPK3. Interacts with the closed conformation form of MAD2L1. Interacts with CDC20. In terms of processing, proteolytically cleaved by caspase-3 in a cell cycle specific manner. The cleavage might be involved in the durability of the cell cycle delay. Acetylation at Lys-243 regulates its degradation and timing in anaphase entry. Post-translationally, ubiquitinated. Degraded by the proteasome. Ubiquitinated by UBR5, promoting disassembly of the mitotic checkpoint complex from the APC/C complex. In terms of processing, sumoylated with SUMO2 and SUMO3. The sumoylation mediates the association with CENPE at the kinetochore. Autophosphorylated in vitro. Intramolecular autophosphorylation stimulated by CENPE. Phosphorylated during mitosis and hyperphosphorylated in mitotically arrested cells. Phosphorylation at Ser-659 and Ser-1033 occurs at kinetochores upon mitotic entry with dephosphorylation at the onset of anaphase. Post-translationally, proteolytically cleaved by caspase-3 in a cell cycle specific manner. The cleavage might be involved in the durability of the cell cycle delay. Caspase-3 cleavage is associated with abrogation of the mitotic checkpoint. The major site of cleavage is at Asp-603. As to expression, highly expressed in thymus followed by spleen.

Its subcellular location is the cytoplasm. It is found in the nucleus. The protein resides in the chromosome. The protein localises to the centromere. It localises to the kinetochore. It carries out the reaction L-seryl-[protein] + ATP = O-phospho-L-seryl-[protein] + ADP + H(+). It catalyses the reaction L-threonyl-[protein] + ATP = O-phospho-L-threonyl-[protein] + ADP + H(+). With respect to regulation, kinase activity stimulated by CENPE. Its function is as follows. Essential component of the mitotic checkpoint. Required for normal mitosis progression and tumor suppression. The mitotic checkpoint delays anaphase until all chromosomes are properly attached to the mitotic spindle. One of its checkpoint functions is to inhibit the activity of the anaphase-promoting complex/cyclosome (APC/C) by blocking the binding of CDC20 to APC/C, independently of its kinase activity. The other is to monitor kinetochore activities that depend on the kinetochore motor CENPE. Required for kinetochore localization of CENPE. Negatively regulates PLK1 activity in interphase cells and suppresses centrosome amplification. Also implicated in triggering apoptosis in polyploid cells that exit aberrantly from mitotic arrest. Essential for tumor suppression. May play a role in regulating aging and fertility. This chain is Mitotic checkpoint serine/threonine-protein kinase BUB1 beta (Bub1b), found in Mus musculus (Mouse).